Here is a 494-residue protein sequence, read N- to C-terminus: MNREAILWKNINSIPEEPDLIKSLEVLSMEQNDRERELEHNLILNKQISEQIPEWIIPDSLSELSSGIDLNFVLEEQEVNDNNSQPSLEEEVVSESDVESMRSFNVAMNRGEVGESSNKRPKREPDLFTSFGKIREDIGDKNPSLNILNLDCVNSPSDRKNKIDKWAAELGLVFLTNPEAYTTAPNAARARLAYMEHKSLGIVNRFIKSTQWTQMNGDILLNVVSGLYTMFLGEDYTGNQEKTLEQERAKASLRLINLQLCDICSLQSFFCDYESNLYKLPQNEYPSLVKQYLAKIPIVGEKASKRFEEEASAATSYSLGFAHKLVNEELAKICELSKKQKKLKRFNKNCCSTFEKPYEYGCKPSYSKKKKYSKKYKPKYTKYKVIRKKKKFSPGKYFKPKDKKSEKAKYCPKGKKTCRCWVCNIEGHYANECPNRQTSEKFKLIQIAENYGLEPIENPYEDQQEICLLEQIQLSSSDSELDDTCEESSSEESE.

The Nuclear localization signal motif lies at 120 to 123 (RPKR). A CCHC-type zinc finger spans residues 418–435 (CRCWVCNIEGHYANECPN). A disordered region spans residues 474 to 494 (LSSSDSELDDTCEESSSEESE). Acidic residues predominate over residues 479 to 494 (SELDDTCEESSSEESE).

Belongs to the caulimoviridae capsid protein family. In terms of assembly, interacts (via nuclear localization signal) with host importin alpha.

It is found in the virion. The protein localises to the host nucleus. Functionally, self assembles to form an icosahedral capsid, about 50 nm in diameter, nm, composed of 420 subunits of the viral capsid protein. The capsid encapsulates the genomic dsDNA. Following virus entry into host cell, provides nuclear import of the viral genome. Virus particles do not enter the nucleus, but dock at the nuclear membrane through the interaction with host importins. This Dianthus caryophyllus (Carnation) protein is Probable capsid protein.